A 423-amino-acid polypeptide reads, in one-letter code: Protein CLP1 homolog (423 aa).

Residues Glu-16, Lys-57, and 119–124 each bind ATP; that span reads DVGKST.

Belongs to the Clp1 family. Clp1 subfamily.

The protein localises to the nucleus. Its function is as follows. Required for endonucleolytic cleavage during polyadenylation-dependent pre-mRNA 3'-end formation. The chain is Protein CLP1 homolog (cbc) from Drosophila yakuba (Fruit fly).